The primary structure comprises 670 residues: Solute carrier organic anion transporter family member 1A6 (670 aa).

The Cytoplasmic segment spans residues methionine 1–lysine 20. A helical transmembrane segment spans residues valine 21–methionine 40. Residues asparagine 41 to glycine 59 are Extracellular-facing. Asparagine 52 is a glycosylation site (N-linked (GlcNAc...) asparagine). Residues leucine 60–glycine 80 form a helical membrane-spanning segment. The Cytoplasmic portion of the chain corresponds to arginine 81 to proline 86. A helical transmembrane segment spans residues isoleucine 87–glycine 111. The Extracellular segment spans residues arginine 112–serine 155. Asparagine 124 and asparagine 135 each carry an N-linked (GlcNAc...) asparagine glycan. The helical transmembrane segment at leucine 156–glutamate 184 threads the bilayer. Residues aspartate 185–lysine 203 are Cytoplasmic-facing. The helical transmembrane segment at isoleucine 204–methionine 224 threads the bilayer. Residues glycine 225–valine 242 lie on the Extracellular side of the membrane. A helical transmembrane segment spans residues glycine 243–proline 267. The Cytoplasmic portion of the chain corresponds to lysine 268 to serine 311. The interval glutamate 276–lysine 295 is disordered. Residues leucine 312–valine 333 form a helical membrane-spanning segment. Topologically, residues serine 334–glutamate 353 are extracellular. The helical transmembrane segment at alanine 354–methionine 377 threads the bilayer. The Cytoplasmic segment spans residues lysine 378–lysine 381. A helical transmembrane segment spans residues isoleucine 382 to asparagine 405. Residues phenylalanine 406 to phenylalanine 513 lie on the Extracellular side of the membrane. Residues asparagine 433 to glutamine 488 enclose the Kazal-like domain. 3 disulfide bridges follow: cysteine 439-cysteine 469, cysteine 445-cysteine 465, and cysteine 454-cysteine 486. The N-linked (GlcNAc...) asparagine glycan is linked to asparagine 492. The chain crosses the membrane as a helical span at residues leucine 514–leucine 536. Over arginine 537–serine 545 the chain is Cytoplasmic. The chain crosses the membrane as a helical span at residues leucine 546–isoleucine 571. Topologically, residues aspartate 572 to proline 605 are extracellular. Residues alanine 606–methionine 623 traverse the membrane as a helical segment. Topologically, residues arginine 624–leucine 670 are cytoplasmic. Residue serine 634 is modified to Phosphoserine. Residues lysine 647–leucine 670 are disordered.

The protein belongs to the organo anion transporter (TC 2.A.60) family.

It localises to the cell membrane. Its function is as follows. May mediate the Na(+)-independent transport of organic anions. This is Solute carrier organic anion transporter family member 1A6 (Slco1a6) from Rattus norvegicus (Rat).